Here is a 354-residue protein sequence, read N- to C-terminus: MLWVDKYRPKTLDKVTVHDQVAQNLKKLVAEQDCPHLLFYGPSGSGKKTLVMALIKQMFGAGADKVKMENKTWKIDTGSRNIEIELAMLSSAHHVEMNPSDAGFQDRYVVQEVIKEMAKNRPIDAKGKRAFKVLVLNEVDKLSREAQHSLRRTMEKYSASCRLILCCNSSSKVTEAVRSRCLNVRVNAPSEDQIVQVLEFIGKKENLQLPFGFAARIAAQSNRNLRRAILFFETCKVQQYPFTSNQVAPPLDWEQYVSEIAADIMKEQSPKRLFAVRQKFYELLVNCIPPESILKKLLAELLKKLDSDLKHEICHWAAHYEHKMRLGSKAIFHLEAFVAKFMSIYKEFLVSTFG.

40–47 (YGPSGSGK) provides a ligand contact to ATP.

The protein belongs to the activator 1 small subunits family. As to quaternary structure, heterotetramer of subunits RFC2, RFC3, RFC4 and RFC5 that can form a complex with RFC1. Expressed in roots, leaves, shoot apical meristem (SAM), flag leaves and panicles.

The protein localises to the nucleus. Functionally, may be involved in DNA replication and thus regulate cell proliferation. This chain is Replication factor C subunit 5 (RFC5), found in Oryza sativa subsp. japonica (Rice).